Here is a 262-residue protein sequence, read N- to C-terminus: MNSSFSAPAKKSLGQHFLADRYYIDRIVQAVDPRAGQHLVEIGPGQGAITFPLLRKHGALTVIEFDRDLIAPLTEAAAPIGALRIIHRDVLSVDFTALADGTPIRLVGNLPYNISSPILFHALDHAAAVADMHFMLQKEVVDRMAAGPGSKVYGRLSVMLQAYCEVTALFVVPPGAFRPPPKVDSAVVRLVPRDPATVLINDRRRFADVVRAGFGQRRKTLRNALSAICEPAHFDAAQVRPDARAEQLEVADFIRLANVELA.

S-adenosyl-L-methionine is bound by residues histidine 16, leucine 18, glycine 43, glutamate 64, aspartate 89, and asparagine 109.

This sequence belongs to the class I-like SAM-binding methyltransferase superfamily. rRNA adenine N(6)-methyltransferase family. RsmA subfamily.

Its subcellular location is the cytoplasm. The catalysed reaction is adenosine(1518)/adenosine(1519) in 16S rRNA + 4 S-adenosyl-L-methionine = N(6)-dimethyladenosine(1518)/N(6)-dimethyladenosine(1519) in 16S rRNA + 4 S-adenosyl-L-homocysteine + 4 H(+). In terms of biological role, specifically dimethylates two adjacent adenosines (A1518 and A1519) in the loop of a conserved hairpin near the 3'-end of 16S rRNA in the 30S particle. May play a critical role in biogenesis of 30S subunits. The protein is Ribosomal RNA small subunit methyltransferase A of Xanthomonas axonopodis pv. citri (strain 306).